Consider the following 1073-residue polypeptide: MHQPPESTAAAAAAADISARKMAHPAMFPRRGSGSGSASALNAAGTGVGSNATSSEDFPPPSLLQPPPPAASSTSGPQPPPPQSLNLLSQAQLQAQPLAPGGTQMKKKSGFQITSVTPAQISASISSNNSIAEDTESYDDLDESHTEDLSSSEILDVSLSRATDLGEPERSSSEETLNNFQEAETPGAVSPNQPHLPQPHLPHLPQQNVVINGNAHPHHLHHHHQIHHGHHLQHGHHHPSHVAVASASITGGPPSSPVSRKLSTTGSSDSITPVAPTSAVSSSGSPASVMTNMRAPSTTGGIGINSVTGTSTVNNVNITAVGSFNPNVTSSMLGNVNISTSNIPSAAGVSVGPGVTSGVNVNILSGMGNGTISSSAAVSSVPNAAAGMTGGSVSSQQQQPTVNTSRFRVVKLDSSSEPFKKGRWTCTEFYEKENAVPATEGVLINKVVETVKQNPIEVTSERESTSGSSVSSSVSTLSHYTESVGSGEMGAPTVVVQQQQQQQQQQQQQPALQGVTLQQMDFGSTGPQSIPAVSIPQSISQSQISQVQLQSQELSYQQKQGLQPVPLQATMSAATGIQPSPVNVVGVTSALGQQPSISSLAQPQLPYSQAAPPVQTPLPGAPPPQQLQYGQQQPMVSTQMAPGHVKSVTQNPASEYVQQQPILQTAMSSGQPSSAGVGAGTTVIPVAQPQGIQLPVQPTAVPAQPAGASVQPVGQAPAAVSAVPTGSQIANIGQQANIPTAVQQPSTQVPPSVIQQGAPPSSQVVPPAQTGIIHQGVQTSAPSLPQQLVIASQSSLLTVPPQPQGVEPVAQGIVSQQLPAVSSLPSASSISVTSQVSSTGPSGMPSAPTNLVPPQNIAQTPATQNGNLVQSVSQPPLIATNTNLPLAQQIPLSSTQFSAQSLAQAIGSQIEDARRAAEPSLVGLPQTISGDSGGMSAVSDGSSSSLAASASLFPLKVLPLTTPLVDGEDESSSGASVVAIDNKIEQAMDLVKSHLMYAVREEVEVLKEQIKELIEKNSQLEQENNLLKTLASPEQLAQFQAQLQTGSPPATTQPQGTTQPPAQPASQGSGPTA.

The tract at residues 1–98 is required for interaction with TGFBR1 and promotion of TGF-beta signaling; sequence MHQPPESTAA…SQAQLQAQPL (98 aa). Disordered stretches follow at residues 22–110, 125–205, 220–288, 458–486, 607–628, and 742–766; these read MAHP…KKSG, ISSN…PHLP, LHHH…SPAS, VTSE…SVGS, YSQA…QQLQ, and VQQP…QVVP. Low complexity predominate over residues 36 to 45; it reads GSASALNAAG. Residues 58-70 show a composition bias toward pro residues; it reads FPPPSLLQPPPPA. The span at 84-100 shows a compositional bias: low complexity; it reads SLNLLSQAQLQAQPLAP. Residues 133-142 show a composition bias toward acidic residues; that stretch reads EDTESYDDLD. Positions 220-240 are enriched in basic residues; it reads LHHHHQIHHGHHLQHGHHHPS. The span at 257 to 271 shows a compositional bias: polar residues; sequence PVSRKLSTTGSSDSI. Serine 263 carries the phosphoserine modification. Composition is skewed to low complexity over residues 272–288 and 465–483; these read TPVA…SPAS and TSGS…YTES. Residues 614–625 are compositionally biased toward pro residues; the sequence is VQTPLPGAPPPQ. Over residues 742–764 the composition is skewed to polar residues; that stretch reads VQQPSTQVPPSVIQQGAPPSSQV. Residues 1006–1027 form a leucine-zipper region; the sequence is LKEQIKELIEKNSQLEQENNLL. Positions 1037-1073 are disordered; the sequence is AQFQAQLQTGSPPATTQPQGTTQPPAQPASQGSGPTA. Residues 1044–1073 are compositionally biased toward low complexity; that stretch reads QTGSPPATTQPQGTTQPPAQPASQGSGPTA.

This sequence belongs to the TSC-22/Dip/Bun family. Forms homodimers. Forms heterodimers. Component of a complex composed of TSC22D1 (via N-terminus), TGFBR1 and TGFBR2; the interaction between TSC22D1 and TGFBR1 is inhibited by SMAD7 and promoted by TGFB1. Interacts with SMAD7; the interaction requires TGF-beta and the interaction is inhibited by TGFBR1. Interacts with TPT1/fortilin; interaction results in the destabilization of TSC22D1 protein and prevents TSC22D1-mediated apoptosis. Interacts with SMAD4 (via N-terminus). Interacts with ACVRL1/ALK1, ACVR1/ALK2, BMPR1A/ALK3, ACVR1B/ALK4, BMPR1B/ALK6, ACVR2A/ACTRII, and BMPR2. Interacts with SMAD6. Interacts with TFE3; the interaction is enhanced in the presence of TGF-beta. In terms of assembly, forms a heterodimer with TSC22D4/THG1. As to quaternary structure, forms a heterodimer with TSC22D4/THG1. Interacts with histone H1-2. Interacts with GNL3. Interacts with histone H1-2. As to expression, ubiquitously expressed in adult tissues. Expressed in the postmitotic epithelial compartment at the top of intestinal mucosal villi.

The protein resides in the cytoplasm. It is found in the nucleus. The protein localises to the cell membrane. It localises to the mitochondrion. Its function is as follows. Transcriptional repressor. Acts on the C-type natriuretic peptide (CNP) promoter. Acts to promote CASP3-mediated apoptosis. Positively regulates TGF-beta signaling by interacting with SMAD7 which inhibits binding of SMAD7 to TGFBR1, preventing recruitment of SMURF ubiquitin ligases to TGFBR1 and inhibiting SMURF-mediated ubiquitination and degradation of TGFBR1. Contributes to enhancement of TGF-beta signaling by binding to and modulating the transcription activator activity of SMAD4. Promotes TGF-beta-induced transcription of COL1A2; via its interaction with TFE3 at E-boxes in the gene proximal promoter. Plays a role in the repression of hematopoietic precursor cell growth. Promotes IL2 deprivation-induced apoptosis in T-lymphocytes, via repression of TSC22D3/GILZ transcription and activation of the caspase cascade. In terms of biological role, may act to negatively regulate TGFB3 signaling and thereby inhibit cell death in mammary gland cells. Functionally, positively regulates cell death in response to TGFB3 during mammary gland involution. This chain is TSC22 domain family protein 1, found in Homo sapiens (Human).